The chain runs to 1795 residues: Protein TIC 214 (1795 aa).

Transmembrane regions (helical) follow at residues 19-39 (IINS…FSIG), 68-88 (FIAG…HLAL), 91-111 (PHTI…WNNH), 133-153 (VFLN…SSML), 176-196 (VGWL…LVWI), and 227-247 (IFSI…PSPI). Residues 1490–1517 (EKESTGQVEFESDKEQQRNSESALSNQE) form a disordered region. The segment covering 1508–1517 (NSESALSNQE) has biased composition (polar residues).

It belongs to the TIC214 family. Part of the Tic complex.

It localises to the plastid. The protein resides in the chloroplast inner membrane. In terms of biological role, involved in protein precursor import into chloroplasts. May be part of an intermediate translocation complex acting as a protein-conducting channel at the inner envelope. The protein is Protein TIC 214 of Crucihimalaya wallichii (Rock-cress).